The chain runs to 902 residues: Gamma-tubulin complex component 2 (902 aa).

Y83 carries the post-translational modification Phosphotyrosine. A disordered region spans residues 875 to 902 (ERSQKAAPQVPVLRGPPAPAPRVAVTAQ).

This sequence belongs to the TUBGCP family. As to quaternary structure, component of the gamma-tubulin ring complex (gTuRC) consisting of TUBGCP2, TUBGCP3, TUBGCP4, TUBGCP5 and TUBGCP6 and gamma-tubulin TUBG1 or TUBG2. TUBGCP2, TUBGCP3, TUBGCP4, TUBGCP5 and TUBGCP6 assemble in a 5:5:2:1:1 stoichiometry; each is associated with a gamma-tubulin, thereby arranging 14 gamma-tubulins in a helical manner. Gamma-tubulin at the first position is blocked by TUBGCP3 at the last position, allowing 13 protafilaments to grow into a microtubule. The gTuRC (via TUBGCP3 and TUBGCP6) interacts with ACTB and MZT1; the interactions form a luminal bridge that stabilizes the initial structure during complex assembly. The gTuRC (via TUBGCP2) interacts with MZT2A/MZT2B and CDK5RAP2 (via CM1 motif); the interactions play a role in gTuRC activation. Interacts with ATF5; the ATF5:PCNT:polyglutamylated tubulin (PGT) tripartite unites the mother centriole and the pericentriolar material (PCM) in the centrosome.

The protein localises to the cytoplasm. It is found in the cytoskeleton. It localises to the microtubule organizing center. Its subcellular location is the centrosome. Functionally, component of the gamma-tubulin ring complex (gTuRC) which mediates microtubule nucleation. The gTuRC regulates the minus-end nucleation of alpha-beta tubulin heterodimers that grow into microtubule protafilaments, a critical step in centrosome duplication and spindle formation. Plays a role in neuronal migration. The polypeptide is Gamma-tubulin complex component 2 (TUBGCP2) (Pongo abelii (Sumatran orangutan)).